We begin with the raw amino-acid sequence, 168 residues long: Cell division inhibitor SulA (168 aa).

Residues 106 to 112 are ftsZ binding; the sequence is ALLTGNY. Positions 161–168 are lon protease binding; sequence KIHSSLYH.

The protein belongs to the SulA family. In terms of assembly, interacts with FtsZ. Post-translationally, is rapidly cleaved and degraded by the Lon protease once DNA damage is repaired.

In terms of biological role, component of the SOS system and an inhibitor of cell division. Accumulation of SulA causes rapid cessation of cell division and the appearance of long, non-septate filaments. In the presence of GTP, binds a polymerization-competent form of FtsZ in a 1:1 ratio, thus inhibiting FtsZ polymerization and therefore preventing it from participating in the assembly of the Z ring. This mechanism prevents the premature segregation of damaged DNA to daughter cells during cell division. This Yersinia enterocolitica serotype O:8 / biotype 1B (strain NCTC 13174 / 8081) protein is Cell division inhibitor SulA.